The chain runs to 176 residues: RNA pyrophosphohydrolase (176 aa).

In terms of domain architecture, Nudix hydrolase spans 8–159 (PYRTCVGMML…KRPVYERVVK (152 aa)). The short motif at 47–68 (GGVDPGEDTWAAAKRELYEETS) is the Nudix box element.

It belongs to the Nudix hydrolase family. RppH subfamily. A divalent metal cation is required as a cofactor.

Its function is as follows. Accelerates the degradation of transcripts by removing pyrophosphate from the 5'-end of triphosphorylated RNA, leading to a more labile monophosphorylated state that can stimulate subsequent ribonuclease cleavage. In Rhodopseudomonas palustris (strain BisA53), this protein is RNA pyrophosphohydrolase.